A 31-amino-acid chain; its full sequence is Cytochrome b6-f complex subunit 6 (31 aa).

Residues 4 to 24 (ITSYFGFLLAALTITSAIFIG) form a helical membrane-spanning segment.

Belongs to the PetL family. In terms of assembly, the 4 large subunits of the cytochrome b6-f complex are cytochrome b6, subunit IV (17 kDa polypeptide, PetD), cytochrome f and the Rieske protein, while the 4 small subunits are PetG, PetL, PetM and PetN. The complex functions as a dimer.

Its subcellular location is the plastid. The protein resides in the chloroplast thylakoid membrane. Its function is as follows. Component of the cytochrome b6-f complex, which mediates electron transfer between photosystem II (PSII) and photosystem I (PSI), cyclic electron flow around PSI, and state transitions. PetL is important for photoautotrophic growth as well as for electron transfer efficiency and stability of the cytochrome b6-f complex. This Ficus carica (Common fig) protein is Cytochrome b6-f complex subunit 6.